We begin with the raw amino-acid sequence, 126 residues long: Protein ApaG (126 aa).

The ApaG domain maps to 2–126; sequence SALDTSIRVE…FRLTTPGLLH (125 aa).

The chain is Protein ApaG from Shewanella baltica (strain OS195).